Here is a 470-residue protein sequence, read N- to C-terminus: MKINSPLEAYKYLPQTNCGECGQPTCMAFASTLIDRSGKTTDCPPLIKEKKFAKKLAELDRLLAPEIRQVTIGVGERAANIGGDDVLYRHKLTFFNKTKMFFDVADNMDEAAIVERVKKISDYKKFYVGRNLLLDGVAIRAASNDPAKFATAVKKVIENTELPVILCSFNPAVLKAGLEVAKGKNPLLYAANKDNWKEVGELALEYNVPVVVSAFNDLDGLKTLAKTFAEAGIKDIVLDPGTYPTGKGLKDTFTNFLKIRRAGIMGDTEIAYPIMAMPLTAWMAGIADPVSASYWETVLSSIFTIRYGDIMLLHSMEPYATMPEVHLAETIYTDPRSPVAVDSKMYKVGNPTADSPVLFTTNFALTYYTVESDLASNGIDCWLLAVNTDGIGVEAAAAGGQLTADKVKDAFEKSGFDLKSDVTHNSVVIPGLAARLQGDIEDKLNVKVMVGPMDSGRLPGWMEKNWPPKK.

The region spanning 1–60 (MKINSPLEAYKYLPQTNCGECGQPTCMAFASTLIDRSGKTTDCPPLIKEKKFAKKLAELD) is the 4Fe-4S domain. Residues Cys18, Cys21, Cys26, and Cys43 each coordinate [4Fe-4S] cluster.

As to quaternary structure, heterodimer of delta and gamma chains. The ACDS complex is made up of alpha, epsilon, beta, gamma and delta chains with a probable stoichiometry of (alpha(2)epsilon(2))(4)-beta(8)-(gamma(1)delta(1))(8). Corrinoid is required as a cofactor. It depends on [4Fe-4S] cluster as a cofactor.

It catalyses the reaction 5,6,7,8-tetrahydrosarcinapterin + methyl-Co(III)-[corrinoid Fe-S protein] = 5-methyltetrahydrosarcinapterin + Co(I)-[corrinoid Fe-S protein] + H(+). It functions in the pathway one-carbon metabolism; methanogenesis from acetate. In terms of biological role, part of a complex that catalyzes the reversible cleavage of acetyl-CoA, allowing growth on acetate as sole source of carbon and energy. The sequence is that of Acetyl-CoA decarbonylase/synthase complex subunit gamma 2 from Methanosarcina mazei (strain ATCC BAA-159 / DSM 3647 / Goe1 / Go1 / JCM 11833 / OCM 88) (Methanosarcina frisia).